An 87-amino-acid chain; its full sequence is U18-myrmicitoxin-Mri1a (87 aa).

Residues 1 to 32 form the signal peptide; that stretch reads MKNNYNRINTFIVYLMVTFSLISIISITECTP. Positions 33–77 constitute an EGF-like domain; sequence NHDPCPPQYAEALCLNGGTCFSVTIMGSDNYNCICAPGFRGWRCQ. 3 disulfide bridges follow: cysteine 37–cysteine 52, cysteine 46–cysteine 65, and cysteine 67–cysteine 76.

O-glycosylated. Expressed by the venom gland.

The protein resides in the secreted. This Manica rubida (European giant red ant) protein is U18-myrmicitoxin-Mri1a.